Reading from the N-terminus, the 189-residue chain is Elongation factor P (189 aa).

It belongs to the elongation factor P family.

It is found in the cytoplasm. It participates in protein biosynthesis; polypeptide chain elongation. Functionally, involved in peptide bond synthesis. Stimulates efficient translation and peptide-bond synthesis on native or reconstituted 70S ribosomes in vitro. Probably functions indirectly by altering the affinity of the ribosome for aminoacyl-tRNA, thus increasing their reactivity as acceptors for peptidyl transferase. The sequence is that of Elongation factor P from Sinorhizobium fredii (strain NBRC 101917 / NGR234).